The sequence spans 244 residues: 5-oxoprolinase subunit A (244 aa).

Belongs to the LamB/PxpA family. In terms of assembly, forms a complex composed of PxpA, PxpB and PxpC.

The enzyme catalyses 5-oxo-L-proline + ATP + 2 H2O = L-glutamate + ADP + phosphate + H(+). Its function is as follows. Catalyzes the cleavage of 5-oxoproline to form L-glutamate coupled to the hydrolysis of ATP to ADP and inorganic phosphate. This chain is 5-oxoprolinase subunit A, found in Salmonella paratyphi C (strain RKS4594).